The sequence spans 398 residues: Transcription termination factor 1, mitochondrial (398 aa).

A mitochondrion-targeting transit peptide spans 1–57 (MQSLSLGQTSISKGLNYLTIMAPGNLWHMRNNFLFGSRCWMTRFSAENIFKSVSFRL). Interaction with DNA regions lie at residues 169–170 (RS), 246–250 (QSTKR), 323–330 (AEKKFNDK), 354–357 (SIST), and 383–390 (SKKRYEAK).

The protein belongs to the mTERF family. As to quaternary structure, monomer. Phosphoprotein with mostly four phosphate groups. While the DNA-binding activity is unaffected by the phosphorylation state, only the phosphorylated form of the protein is active for termination activity. Functioning seems to be regulated by phosphorylation.

The protein localises to the mitochondrion. Its function is as follows. Transcription termination factor. Binds to a 28 bp region within the tRNA(Leu(uur)) gene at a position immediately adjacent to and downstream of the 16S rRNA gene; this region comprises a tridecamer sequence critical for directing accurate termination. Binds DNA along the major grove and promotes DNA bending and partial unwinding. Promotes base flipping. Transcription termination activity appears to be polarized with highest specificity for transcripts initiated on the light strand. The sequence is that of Transcription termination factor 1, mitochondrial (MTERF1) from Pongo abelii (Sumatran orangutan).